Consider the following 309-residue polypeptide: Elongation factor Ts (309 aa).

The interval 82-85 (TDFV) is involved in Mg(2+) ion dislocation from EF-Tu.

Belongs to the EF-Ts family.

The protein localises to the cytoplasm. Associates with the EF-Tu.GDP complex and induces the exchange of GDP to GTP. It remains bound to the aminoacyl-tRNA.EF-Tu.GTP complex up to the GTP hydrolysis stage on the ribosome. This Rickettsia typhi (strain ATCC VR-144 / Wilmington) protein is Elongation factor Ts.